A 538-amino-acid chain; its full sequence is Phosphoenolpyruvate carboxykinase (ATP) (538 aa).

Arginine 61, tyrosine 195, and lysine 201 together coordinate substrate. ATP-binding positions include lysine 201, histidine 220, and 236-244 (GLSGTGKTT). Mn(2+) is bound by residues lysine 201 and histidine 220. Position 257 (aspartate 257) interacts with Mn(2+). Residues glutamate 285, arginine 323, and threonine 449 each contribute to the ATP site. Arginine 323 contacts substrate.

This sequence belongs to the phosphoenolpyruvate carboxykinase (ATP) family. Mn(2+) serves as cofactor.

The protein resides in the cytoplasm. The catalysed reaction is oxaloacetate + ATP = phosphoenolpyruvate + ADP + CO2. It participates in carbohydrate biosynthesis; gluconeogenesis. In terms of biological role, involved in the gluconeogenesis. Catalyzes the conversion of oxaloacetate (OAA) to phosphoenolpyruvate (PEP) through direct phosphoryl transfer between the nucleoside triphosphate and OAA. The protein is Phosphoenolpyruvate carboxykinase (ATP) of Afipia carboxidovorans (strain ATCC 49405 / DSM 1227 / KCTC 32145 / OM5) (Oligotropha carboxidovorans).